Reading from the N-terminus, the 355-residue chain is F-box only protein 32 (355 aa).

Residues 62 to 67 (KKRKKD) carry the Nuclear localization signal motif. The Nuclear export signal signature appears at 169-173 (LLQTL). In terms of domain architecture, F-box spans 223 to 271 (LTFTDLPLCLQLNIMQRLSDGRDLVSLGQVAPDLHVLSEDRLLWKKLCQ). The Bipartite nuclear localization signal motif lies at 280–295 (RKRLILSDKGQLDWKK).

Part of the SCF (SKP1-CUL1-F-box) E3 ubiquitin-protein ligase complex SCF(FBXO32) formed of CUL1, SKP1, RBX1 and FBXO32.

The protein localises to the cytoplasm. It is found in the nucleus. It participates in protein modification; protein ubiquitination. Functionally, substrate recognition component of a SCF (SKP1-CUL1-F-box protein) E3 ubiquitin-protein ligase complex which mediates the ubiquitination and subsequent proteasomal degradation of target proteins. Probably recognizes and binds to phosphorylated target proteins during skeletal muscle atrophy. Recognizes TERF1. The chain is F-box only protein 32 (FBXO32) from Sus scrofa (Pig).